The following is an 830-amino-acid chain: ATP-dependent DNA helicase chl-1 (830 aa).

The Helicase ATP-binding domain maps to 1–403 (MDEFSFPFQP…HNLLYMKQLE (403 aa)). Residue 35–42 (SPTGTGKS) coordinates ATP. Basic and acidic residues-rich tracts occupy residues 124 to 140 (GMVE…RDTD) and 157 to 168 (NDEKSEKQRDSD). The segment at 124–173 (GMVEVSRKRKAPARDTDQFLEPQDEAAPSEEYNNDEKSEKQRDSDFFDDV) is disordered. 4 residues coordinate [4Fe-4S] cluster: Cys222, Cys240, Cys272, and Cys308. Positions 351–354 (DEAH) match the DEAH box motif.

Belongs to the DEAD box helicase family. DEAH subfamily. DDX11/CHL1 sub-subfamily. [4Fe-4S] cluster is required as a cofactor.

It is found in the nucleus. It catalyses the reaction Couples ATP hydrolysis with the unwinding of duplex DNA at the replication fork by translocating in the 5'-3' direction. This creates two antiparallel DNA single strands (ssDNA). The leading ssDNA polymer is the template for DNA polymerase III holoenzyme which synthesizes a continuous strand.. The enzyme catalyses ATP + H2O = ADP + phosphate + H(+). Required for normal cell proliferation and chromosome stability. Plays a role in DNA repair during replication. The polypeptide is ATP-dependent DNA helicase chl-1 (Caenorhabditis elegans).